The chain runs to 197 residues: Xanthine phosphoribosyltransferase (197 aa).

Residues L20 and N27 each coordinate xanthine. Residue 128–132 participates in 5-phospho-alpha-D-ribose 1-diphosphate binding; the sequence is ANGQA. K156 contacts xanthine.

The protein belongs to the purine/pyrimidine phosphoribosyltransferase family. Xpt subfamily. As to quaternary structure, homodimer.

It is found in the cytoplasm. The enzyme catalyses XMP + diphosphate = xanthine + 5-phospho-alpha-D-ribose 1-diphosphate. Its pathway is purine metabolism; XMP biosynthesis via salvage pathway; XMP from xanthine: step 1/1. Its function is as follows. Converts the preformed base xanthine, a product of nucleic acid breakdown, to xanthosine 5'-monophosphate (XMP), so it can be reused for RNA or DNA synthesis. This Bacillus thuringiensis (strain Al Hakam) protein is Xanthine phosphoribosyltransferase.